A 103-amino-acid chain; its full sequence is Protein E7 (103 aa).

The tract at residues 1-45 (MIGKEVTVRDIVLELSEVQPEVLPVDLFCDEELPNEQQAEEELDI) is E7 terminal domain. Positions 27 to 31 (LFCDE) match the LXCXE motif; interaction with host RB1 and TMEM173/STING motif. Residues 56 to 94 (CGCSCCEVKLRIFVNATNRGIRTFQELLTGDLQLLCPEC) fold into a zinc finger. A Nuclear export signal motif is present at residues 76–84 (IRTFQELLT).

The protein belongs to the papillomaviridae E7 protein family. In terms of assembly, homodimer. Homooligomer. Interacts with host RB1; this interaction induces dissociation of RB1-E2F1 complex thereby disrupting RB1 activity. Interacts with host EP300; this interaction represses EP300 transcriptional activity. Interacts with protein E2; this interaction inhibits E7 oncogenic activity. Interacts with host TMEM173/STING; this interaction impairs the ability of TMEM173/STING to sense cytosolic DNA and promote the production of type I interferon (IFN-alpha and IFN-beta). Highly phosphorylated.

The protein resides in the host cytoplasm. It localises to the host nucleus. Functionally, plays a role in viral genome replication by driving entry of quiescent cells into the cell cycle. Stimulation of progression from G1 to S phase allows the virus to efficiently use the cellular DNA replicating machinery to achieve viral genome replication. E7 protein has both transforming and trans-activating activities. Induces the disassembly of the E2F1 transcription factor from RB1, with subsequent transcriptional activation of E2F1-regulated S-phase genes. Interferes with host histone deacetylation mediated by HDAC1 and HDAC2, leading to transcription activation. Also plays a role in the inhibition of both antiviral and antiproliferative functions of host interferon alpha. Interaction with host TMEM173/STING impairs the ability of TMEM173/STING to sense cytosolic DNA and promote the production of type I interferon (IFN-alpha and IFN-beta). This is Protein E7 from Homo sapiens (Human).